A 273-amino-acid polypeptide reads, in one-letter code: MAVGVFDSGLGGLTVLDAVSRRLPEVPFVYYGDNLHAPYGVRDAEDVYELTTGAVSRLWDEGCDLVILACNTASAAALRRMQESWVPSDKRVLGVFVPLIEALTERQWGDNSPPREVAIKHVALFATPATVSSRAFQRELAFRAIGVDVEAQPCGGVVDAIEDGDMILAEALVRSHVEALKRRMPHPEAAILGCTHYPLMQDVFQDALGADVKVYSQAQLVAESLADYLTRHPDMLGLGAEPGFLTTGDPKSVSNKATQFLRRKIEFRAVEPL.

Substrate contacts are provided by residues 7–8 (DS) and 39–40 (YG). Cys-70 serves as the catalytic Proton donor/acceptor. Residue 71–72 (NT) coordinates substrate. Residue Cys-194 is the Proton donor/acceptor of the active site. Residue 195 to 196 (TH) coordinates substrate.

It belongs to the aspartate/glutamate racemases family.

The enzyme catalyses L-glutamate = D-glutamate. It functions in the pathway cell wall biogenesis; peptidoglycan biosynthesis. Provides the (R)-glutamate required for cell wall biosynthesis. This Dinoroseobacter shibae (strain DSM 16493 / NCIMB 14021 / DFL 12) protein is Glutamate racemase.